Consider the following 141-residue polypeptide: Large ribosomal subunit protein uL11 (141 aa).

This sequence belongs to the universal ribosomal protein uL11 family. As to quaternary structure, part of the ribosomal stalk of the 50S ribosomal subunit. Interacts with L10 and the large rRNA to form the base of the stalk. L10 forms an elongated spine to which L12 dimers bind in a sequential fashion forming a multimeric L10(L12)X complex. One or more lysine residues are methylated.

Forms part of the ribosomal stalk which helps the ribosome interact with GTP-bound translation factors. This Prochlorococcus marinus (strain MIT 9313) protein is Large ribosomal subunit protein uL11.